The following is a 67-amino-acid chain: Large ribosomal subunit protein bL32 (67 aa).

The segment covering 1–19 (MAVPKRKMSRANTRARRAQ) has biased composition (basic residues). The interval 1 to 20 (MAVPKRKMSRANTRARRAQW) is disordered.

It belongs to the bacterial ribosomal protein bL32 family.

The chain is Large ribosomal subunit protein bL32 from Paenarthrobacter aurescens (strain TC1).